Here is a 173-residue protein sequence, read N- to C-terminus: Large ribosomal subunit protein uL10 (173 aa).

This sequence belongs to the universal ribosomal protein uL10 family. Part of the ribosomal stalk of the 50S ribosomal subunit. The N-terminus interacts with L11 and the large rRNA to form the base of the stalk. The C-terminus forms an elongated spine to which L12 dimers bind in a sequential fashion forming a multimeric L10(L12)X complex.

In terms of biological role, forms part of the ribosomal stalk, playing a central role in the interaction of the ribosome with GTP-bound translation factors. In Cupriavidus pinatubonensis (strain JMP 134 / LMG 1197) (Cupriavidus necator (strain JMP 134)), this protein is Large ribosomal subunit protein uL10.